A 411-amino-acid chain; its full sequence is E3 ubiquitin-protein ligase PUB23 (411 aa).

The region spanning Glu11–Tyr86 is the U-box domain. 4 ARM repeats span residues Ala132–Thr173, Glu175–Tyr203, Asp221–Pro261, and Gly263–Gln306.

In terms of assembly, interacts with RPN12A. Post-translationally, auto-ubiquitinated.

Its subcellular location is the cytoplasm. It carries out the reaction S-ubiquitinyl-[E2 ubiquitin-conjugating enzyme]-L-cysteine + [acceptor protein]-L-lysine = [E2 ubiquitin-conjugating enzyme]-L-cysteine + N(6)-ubiquitinyl-[acceptor protein]-L-lysine.. Its pathway is protein modification; protein ubiquitination. Functionally, E3 ubiquitin-protein ligase that negatively regulates water stress response. May control in coordination with PUB23 a drought signaling pathway by ubiquitinating cytosolic RPN12a. Acts as a negative regulator of the immunity triggered by the pathogen-associated molecular patterns (PAMPs), in association with PUB22 and PUB24. The sequence is that of E3 ubiquitin-protein ligase PUB23 (PUB23) from Arabidopsis thaliana (Mouse-ear cress).